Reading from the N-terminus, the 218-residue chain is MGQKIHPLGFRLGVTQEHLSNWFARPSRYSDLLEEDEKIRNCIKEYVRTHIRNSSNYGGISRVKIQRKTDLVQVDIHTGFPALLIEGRGKGLLVLKQSVLNSISTERKLKITLSEIDKYYAEANILAEYIALQLESRVAFRRTMKKAIQLAMEQGKVKGIKIQIAGRLNGAEIARIEWAREGRVPLQTLRACIDYCHYPAQTTYGVLGIKVWIFKGEE.

The region spanning 47 to 117 (VRTHIRNSSN…KLKITLSEID (71 aa)) is the KH type-2 domain.

The protein belongs to the universal ribosomal protein uS3 family. Part of the 30S ribosomal subunit.

It is found in the plastid. The protein resides in the chloroplast. The sequence is that of Small ribosomal subunit protein uS3c (rps3) from Spirogyra maxima (Green alga).